A 963-amino-acid polypeptide reads, in one-letter code: Kinesin-1 heavy chain (963 aa).

N-acetylalanine is present on Ala2. Residues 8 to 325 (NIKVMCRFRP…LLFGQRAKTI (318 aa)) form the Kinesin motor domain. 85–92 (GQTSSGKT) lines the ATP pocket. A Glycyl lysine isopeptide (Lys-Gly) (interchain with G-Cter in SUMO2) cross-link involves residue Lys213. Residues 330-913 (CVNVELTAEQ…EAVRSKNMAR (584 aa)) adopt a coiled-coil conformation. The segment at 908–963 (SKNMARRGHSAQIAKPIRPGQHPAASPTHPGAVRGGGSFVQNNQPVGLRGGGGKQA) is disordered. A globular region spans residues 915–963 (GHSAQIAKPIRPGQHPAASPTHPGAVRGGGSFVQNNQPVGLRGGGGKQA). Residues Ser933 and Ser945 each carry the phosphoserine modification. Arg956 is modified (omega-N-methylarginine).

The protein belongs to the TRAFAC class myosin-kinesin ATPase superfamily. Kinesin family. Kinesin subfamily. Oligomer composed of two heavy chains and two light chains. Interacts with GRIP1 and PPP1R42. Interacts with SYBU. Interacts with JAKMIP1. Interacts with PLEKHM2. Interacts with ECPAS. Interacts with ZFYVE27. Found in a complex with OGT, RHOT1, RHOT2 and TRAK1. Interacts with APP (via cytoplasmic domain). As to expression, expressed in the brain (at protein level). Expressed in the brain, liver, kidney, spleen, heart, lung and sciatic nerve.

The protein localises to the cytoplasm. The protein resides in the cytoskeleton. It localises to the cytolytic granule membrane. It is found in the lysosome membrane. In terms of biological role, microtubule-dependent motor required for normal distribution of mitochondria and lysosomes. Can induce formation of neurite-like membrane protrusions in non-neuronal cells in a ZFYVE27-dependent manner. Regulates centrosome and nuclear positioning during mitotic entry. During the G2 phase of the cell cycle in a BICD2-dependent manner, antagonizes dynein function and drives the separation of nuclei and centrosomes. Required for anterograde axonal transportation of MAPK8IP3/JIP3 which is essential for MAPK8IP3/JIP3 function in axon elongation. Through binding with PLEKHM2 and ARL8B, directs lysosome movement toward microtubule plus ends. Involved in NK cell-mediated cytotoxicity. Drives the polarization of cytolytic granules and microtubule-organizing centers (MTOCs) toward the immune synapse between effector NK lymphocytes and target cells. This is Kinesin-1 heavy chain from Rattus norvegicus (Rat).